The sequence spans 124 residues: Small ribosomal subunit protein bS16 (124 aa).

The segment covering 81–90 has biased composition (basic residues); it reads LKKRPARNNP. The disordered stretch occupies residues 81 to 124; sequence LKKRPARNNPHKGEPGKKAQERIAAAKQAAEDAAAAAEADSASE. Positions 91 to 101 are enriched in basic and acidic residues; the sequence is HKGEPGKKAQE. Low complexity predominate over residues 102-124; that stretch reads RIAAAKQAAEDAAAAAEADSASE.

Belongs to the bacterial ribosomal protein bS16 family.

The protein is Small ribosomal subunit protein bS16 of Bartonella tribocorum (strain CIP 105476 / IBS 506).